The chain runs to 51 residues: MFIFNLNKKESKMNEDRIKGQWKQLAGKIKERYGIAHDEARKQVKKFHDSL.

Belongs to the UPF0337 (CsbD) family.

This chain is UPF0337 protein NE0131, found in Nitrosomonas europaea (strain ATCC 19718 / CIP 103999 / KCTC 2705 / NBRC 14298).